The following is a 62-amino-acid chain: Photosystem II reaction center protein Z (62 aa).

A run of 2 helical transmembrane segments spans residues 8–28 and 41–61; these read AVFALIATSSILLISVPVVFA and FSGTSLWIGLVFLVAILNSLI.

The protein belongs to the PsbZ family. As to quaternary structure, PSII is composed of 1 copy each of membrane proteins PsbA, PsbB, PsbC, PsbD, PsbE, PsbF, PsbH, PsbI, PsbJ, PsbK, PsbL, PsbM, PsbT, PsbY, PsbZ, Psb30/Ycf12, at least 3 peripheral proteins of the oxygen-evolving complex and a large number of cofactors. It forms dimeric complexes.

The protein resides in the plastid. It is found in the chloroplast thylakoid membrane. In terms of biological role, may control the interaction of photosystem II (PSII) cores with the light-harvesting antenna, regulates electron flow through the 2 photosystem reaction centers. PSII is a light-driven water plastoquinone oxidoreductase, using light energy to abstract electrons from H(2)O, generating a proton gradient subsequently used for ATP formation. The protein is Photosystem II reaction center protein Z of Amborella trichopoda.